Here is a 32-residue protein sequence, read N- to C-terminus: LVDTFPGQSIDFFGALREGPPTFEQPAMTIEK.

Positions 13–32 (FGALREGPPTFEQPAMTIEK) are disordered.

It belongs to the RuBisCO activase family.

It is found in the plastid. The protein localises to the chloroplast stroma. Its function is as follows. Activation of RuBisCO (ribulose-1,5-bisphosphate carboxylase/oxygenase; EC 4.1.1.39) involves the ATP-dependent carboxylation of the epsilon-amino group of lysine leading to a carbamate structure. This Populus euphratica (Euphrates poplar) protein is Ribulose bisphosphate carboxylase/oxygenase activase, chloroplastic.